Here is a 501-residue protein sequence, read N- to C-terminus: Aspartyl/glutamyl-tRNA(Asn/Gln) amidotransferase subunit B (501 aa).

Belongs to the GatB/GatE family. GatB subfamily. As to quaternary structure, heterotrimer of A, B and C subunits.

The catalysed reaction is L-glutamyl-tRNA(Gln) + L-glutamine + ATP + H2O = L-glutaminyl-tRNA(Gln) + L-glutamate + ADP + phosphate + H(+). It catalyses the reaction L-aspartyl-tRNA(Asn) + L-glutamine + ATP + H2O = L-asparaginyl-tRNA(Asn) + L-glutamate + ADP + phosphate + 2 H(+). In terms of biological role, allows the formation of correctly charged Asn-tRNA(Asn) or Gln-tRNA(Gln) through the transamidation of misacylated Asp-tRNA(Asn) or Glu-tRNA(Gln) in organisms which lack either or both of asparaginyl-tRNA or glutaminyl-tRNA synthetases. The reaction takes place in the presence of glutamine and ATP through an activated phospho-Asp-tRNA(Asn) or phospho-Glu-tRNA(Gln). The polypeptide is Aspartyl/glutamyl-tRNA(Asn/Gln) amidotransferase subunit B (Mycobacterium sp. (strain KMS)).